The chain runs to 338 residues: MSASGLPFDDFRELLRNLPGPDAAALVAARERDAQLTKPPGALGRLEEIAFWLAAWTGRPPAVNRPLVAIFAGNHGVTRQGVTPFPSSVTAQMVENFAAGGAAINQICVTHDLGLKVFDLALDYPTGDITEEAALSERDCAATMAFGMEAIAGGTDLLCIGEMGIGNTTIAAAINLGLYGGTAEEWVGPGTGSEGEVLKRKIAAVERAVALHRDHLSDPLELMRRLGGREIAAMAGAILAARMQKVPVIIDGYVATAAAAILKAANPAALDHCLIGHVSGEPGHIRAIEKLGKTPLLALGMRLGEGTGAALAAGIVKAAAACHGGMATFAQAGVSNKD.

Glutamate 305 acts as the Proton acceptor in catalysis.

Belongs to the CobT family.

It carries out the reaction 5,6-dimethylbenzimidazole + nicotinate beta-D-ribonucleotide = alpha-ribazole 5'-phosphate + nicotinate + H(+). It functions in the pathway nucleoside biosynthesis; alpha-ribazole biosynthesis; alpha-ribazole from 5,6-dimethylbenzimidazole: step 1/2. Its function is as follows. Catalyzes the synthesis of alpha-ribazole-5'-phosphate from nicotinate mononucleotide (NAMN) and 5,6-dimethylbenzimidazole (DMB). In Sinorhizobium fredii (strain NBRC 101917 / NGR234), this protein is Nicotinate-nucleotide--dimethylbenzimidazole phosphoribosyltransferase.